Here is a 372-residue protein sequence, read N- to C-terminus: Cytochrome b (372 aa).

The next 4 helical transmembrane spans lie at 25–45 (FGSM…FLAL), 69–90 (WIMQ…YIHI), 105–125 (WLSG…GYVL), and 170–190 (FFAL…IHII). The heme b site is built by histidine 75 and histidine 89. Positions 174 and 188 each coordinate heme b. Histidine 193 serves as a coordination point for a ubiquinone. 4 helical membrane passes run 218–238 (YKDM…LSFA), 280–300 (LGGT…PFTH), 312–332 (LSQI…WTAS), and 339–358 (FITI…ITTP).

This sequence belongs to the cytochrome b family. As to quaternary structure, the cytochrome bc1 complex contains 3 respiratory subunits (MT-CYB, CYC1 and UQCRFS1), 2 core proteins (UQCRC1 and UQCRC2) and probably 6 low-molecular weight proteins. It depends on heme b as a cofactor.

The protein resides in the mitochondrion inner membrane. Its function is as follows. Component of the ubiquinol-cytochrome c reductase complex (complex III or cytochrome b-c1 complex) that is part of the mitochondrial respiratory chain. The b-c1 complex mediates electron transfer from ubiquinol to cytochrome c. Contributes to the generation of a proton gradient across the mitochondrial membrane that is then used for ATP synthesis. The sequence is that of Cytochrome b (MT-CYB) from Naja nivea (Cape cobra).